We begin with the raw amino-acid sequence, 136 residues long: Group 1 truncated hemoglobin GlbN (136 aa).

His-81 contributes to the heme binding site.

This sequence belongs to the truncated hemoglobin family. Group I subfamily. Homodimer. Heme serves as cofactor.

Binds oxygen cooperatively with very high affinity (P(50) = 0.013 mmHg at 20 degrees Celsius) because of a fast combination (25 microM(-1)sec(-1)) and a slow dissociation (0.2 sec(-1)) rate. The polypeptide is Group 1 truncated hemoglobin GlbN (glbN) (Mycobacterium bovis (strain ATCC BAA-935 / AF2122/97)).